Reading from the N-terminus, the 533-residue chain is uncharacterized protein (533 aa).

The first 21 residues, 1 to 21, serve as a signal peptide directing secretion; the sequence is MVKVWKIGFGVFLPTALLFSA. Residue cysteine 22 is the site of N-palmitoyl cysteine attachment. Residue cysteine 22 is the site of S-diacylglycerol cysteine attachment. Residues 91 to 111 form a disordered region; sequence LSKNKEGQTASQTRSSSEQTT. A compositionally biased stretch (polar residues) spans 97–111; it reads GQTASQTRSSSEQTT.

It belongs to the MG067/MG068/MG395 family.

The protein localises to the cell membrane. This is an uncharacterized protein from Mycoplasma pneumoniae (strain ATCC 29342 / M129 / Subtype 1) (Mycoplasmoides pneumoniae).